Consider the following 530-residue polypeptide: uncharacterized protein (530 aa).

Residues 485–529 (SKEENREIKLSIRENKEKQRKKSVEKSVSKLQNQLNRLLNKNTIE) adopt a coiled-coil conformation.

This is an uncharacterized protein from Acanthamoeba polyphaga (Amoeba).